The chain runs to 517 residues: ATP synthase subunit alpha (517 aa).

175 to 182 (GDRQTGKT) contacts ATP.

Belongs to the ATPase alpha/beta chains family. As to quaternary structure, F-type ATPases have 2 components, CF(1) - the catalytic core - and CF(0) - the membrane proton channel. CF(1) has five subunits: alpha(3), beta(3), gamma(1), delta(1), epsilon(1). CF(0) has three main subunits: a(1), b(2) and c(9-12). The alpha and beta chains form an alternating ring which encloses part of the gamma chain. CF(1) is attached to CF(0) by a central stalk formed by the gamma and epsilon chains, while a peripheral stalk is formed by the delta and b chains.

It localises to the cell membrane. The enzyme catalyses ATP + H2O + 4 H(+)(in) = ADP + phosphate + 5 H(+)(out). Functionally, produces ATP from ADP in the presence of a proton gradient across the membrane. The alpha chain is a regulatory subunit. In Herpetosiphon aurantiacus (strain ATCC 23779 / DSM 785 / 114-95), this protein is ATP synthase subunit alpha.